A 106-amino-acid chain; its full sequence is Nucleoid-associated protein DIP0260 (106 aa).

This sequence belongs to the YbaB/EbfC family. Homodimer.

Its subcellular location is the cytoplasm. The protein resides in the nucleoid. Functionally, binds to DNA and alters its conformation. May be involved in regulation of gene expression, nucleoid organization and DNA protection. The protein is Nucleoid-associated protein DIP0260 of Corynebacterium diphtheriae (strain ATCC 700971 / NCTC 13129 / Biotype gravis).